Reading from the N-terminus, the 137-residue chain is Small heat shock protein IbpA (137 aa).

One can recognise a sHSP domain in the interval Asn28–Lys137.

This sequence belongs to the small heat shock protein (HSP20) family. As to quaternary structure, monomer. Forms homomultimers of about 100-150 subunits at optimal growth temperatures. Conformation changes to monomers at high temperatures or high ionic concentrations.

Its subcellular location is the cytoplasm. Functionally, associates with aggregated proteins, together with IbpB, to stabilize and protect them from irreversible denaturation and extensive proteolysis during heat shock and oxidative stress. Aggregated proteins bound to the IbpAB complex are more efficiently refolded and reactivated by the ATP-dependent chaperone systems ClpB and DnaK/DnaJ/GrpE. Its activity is ATP-independent. The polypeptide is Small heat shock protein IbpA (Yersinia pseudotuberculosis serotype O:1b (strain IP 31758)).